The chain runs to 467 residues: Cell division protein FtsP (467 aa).

Residues 1–28 constitute a signal peptide (tat-type signal); that stretch reads MRSLTRRDFLKSGILASSLSCIPQSVMA.

The protein belongs to the FtsP family. In terms of processing, predicted to be exported by the Tat system. The position of the signal peptide cleavage has not been experimentally proven.

The protein resides in the periplasm. Its function is as follows. Cell division protein that is required for growth during stress conditions. May be involved in protecting or stabilizing the divisomal assembly under conditions of stress. This Histophilus somni (strain 2336) (Haemophilus somnus) protein is Cell division protein FtsP.